A 7705-amino-acid polypeptide reads, in one-letter code: Copine family protein 2 (7705 aa).

Disordered regions lie at residues 1–61, 269–360, 372–408, 464–492, 506–538, 560–614, 1301–1358, 4381–4427, and 6779–6800; these read MNDY…RHSE, KEGN…NNSQ, SERKTAKQREQELLQRSERRSGGRTHSHEEYRRHQQP, GDRAHLQYRPRAQKGAAGPTTRGAPTSSV, STEPSPVPSRRALPKSASLSSVQQKQPIKTADG, DERA…QGPP, NRSE…DQQV, ELEP…RSES, and RDEHHEHISETKSYPRDGGKFT. Low complexity predominate over residues 12 to 25; sequence SSQKSNNQKISNNS. A compositionally biased stretch (basic and acidic residues) spans 269 to 282; the sequence is KEGNNPSCCRERGT. The span at 302-313 shows a compositional bias: low complexity; sequence STSTKVAVTSAS. Residues 318-336 show a composition bias toward basic residues; the sequence is IKDHKKQLKKEKEKKKKMD. Basic and acidic residues predominate over residues 372–404; sequence SERKTAKQREQELLQRSERRSGGRTHSHEEYRR. Polar residues predominate over residues 522–532; sequence ASLSSVQQKQP. The span at 560-587 shows a compositional bias: basic and acidic residues; the sequence is DERAKDFLRGDRSSRLSPQSERKNERQI. The span at 588–597 shows a compositional bias: polar residues; it reads QIRQQSSGPT. Composition is skewed to basic and acidic residues over residues 598 to 611 and 1301 to 1335; these read NRRETEIEYEEKRQ and NRSELREMRSEEKRSNSMHHEESHYAHSSYEHTSE. The span at 4397-4409 shows a compositional bias: low complexity; it reads RQSRVYRSSSQVR. 2 stretches are compositionally biased toward basic and acidic residues: residues 4411 to 4427 and 6779 to 6797; these read PSEESIQKTEALRRSES and RDEHHEHISETKSYPRDGG. The VWFA domain occupies 7475-7673; the sequence is NLIFGIDYTK…FHKVMFNAPN (199 aa).

The protein belongs to the copine family. In terms of tissue distribution, expressed in body wall muscle.

This chain is Copine family protein 2 (cpna-2), found in Caenorhabditis elegans.